The chain runs to 146 residues: UPF0260 protein Sbal_1871 (146 aa).

The protein belongs to the UPF0260 family.

In Shewanella baltica (strain OS155 / ATCC BAA-1091), this protein is UPF0260 protein Sbal_1871.